Consider the following 141-residue polypeptide: Cystatin-SN (141 aa).

The N-terminal stretch at 1–20 is a signal peptide; sequence MAQYLSTLLLLLATLAVALA. A Secondary area of contact motif is present at residues 76–80; the sequence is QTVGG. Disulfide bonds link cysteine 94/cysteine 104 and cysteine 118/cysteine 138.

Belongs to the cystatin family. In terms of tissue distribution, expressed in submandibular and sublingual saliva but not in parotid saliva (at protein level). Expressed in saliva, tears, urine and seminal fluid.

It is found in the secreted. Its function is as follows. Human saliva appears to contain several cysteine proteinase inhibitors that are immunologically related to cystatin S but that differ in their specificity due to amino acid sequence differences. Cystatin SN, with a pI of 7.5, is a much better inhibitor of papain and dipeptidyl peptidase I than is cystatin S, although both inhibit ficin equally well. In Homo sapiens (Human), this protein is Cystatin-SN (CST1).